The following is a 156-amino-acid chain: Large ribosomal subunit protein uL15 (156 aa).

The segment at 14–35 (GSRTHGWGRVGQHRKSGSSGGK) is disordered.

This sequence belongs to the universal ribosomal protein uL15 family. In terms of assembly, part of the 50S ribosomal subunit.

Binds to the 23S rRNA. The chain is Large ribosomal subunit protein uL15 from Pyrobaculum islandicum (strain DSM 4184 / JCM 9189 / GEO3).